We begin with the raw amino-acid sequence, 254 residues long: Probable septum site-determining protein MinC (254 aa).

It belongs to the MinC family. As to quaternary structure, interacts with MinD and FtsZ.

Its function is as follows. Cell division inhibitor that blocks the formation of polar Z ring septums. Rapidly oscillates between the poles of the cell to destabilize FtsZ filaments that have formed before they mature into polar Z rings. Prevents FtsZ polymerization. The polypeptide is Probable septum site-determining protein MinC (Burkholderia ambifaria (strain ATCC BAA-244 / DSM 16087 / CCUG 44356 / LMG 19182 / AMMD) (Burkholderia cepacia (strain AMMD))).